Here is an 860-residue protein sequence, read N- to C-terminus: Protein argonaute-2 (860 aa).

3'-nitrotyrosine is present on tyrosine 2. One can recognise a PAZ domain in the interval proline 230 to alanine 349. Residues tyrosine 312–histidine 317 are interaction with guide RNA. Serine 388 is modified (phosphoserine). In terms of domain architecture, Piwi spans leucine 518–valine 819. The interval glycine 525–lysine 567 is interaction with guide RNA. The interval phenylalanine 588–proline 591 is interaction with GW182 family members. Aspartate 598 contacts a divalent metal cation. The interval leucine 651–lysine 661 is interaction with GW182 family members. Aspartate 670 is a binding site for a divalent metal cation. Proline 701 carries the post-translational modification 4-hydroxyproline. Interaction with guide RNA regions lie at residues lysine 710–arginine 711, histidine 754–arginine 762, and tyrosine 791–arginine 813. Residue histidine 808 participates in a divalent metal cation binding. Serine 825, serine 829, serine 832, and serine 835 each carry phosphoserine.

Belongs to the argonaute family. Ago subfamily. As to quaternary structure, interacts with DICER1 through its Piwi domain and with TARBP2 during assembly of the RNA-induced silencing complex (RISC). Together, DICER1, AGO2 and TARBP2 constitute the trimeric RISC loading complex (RLC), or micro-RNA (miRNA) loading complex (miRLC). Within the RLC/miRLC, DICER1 and TARBP2 are required to process precursor miRNAs (pre-miRNAs) to mature miRNAs and then load them onto AGO2. AGO2 bound to the mature miRNA constitutes the minimal RISC and may subsequently dissociate from DICER1 and TARBP2. Note however that the term RISC has also been used to describe the trimeric RLC/miRLC. The formation of RISC complexes containing siRNAs rather than miRNAs appears to occur independently of DICER1. Interacts with AGO1. Also interacts with DDB1, DDX5, DDX6, DDX20, DHX30, DHX36, DDX47, DHX9, ELAVL, FXR1, GEMIN4, HNRNPF, IGF2BP1, ILF3, IMP8, MATR3, PABPC1, PRMT5, P4HA1, P4HB, RBM4, SART3, TNRC6A, TNRC6B, UPF1 and YBX1. Interacts with the P-body components DCP1A and XRN1. Associates with polysomes and messenger ribonucleoproteins (mNRPs). Interacts with RBM4; the interaction is modulated under stress-induced conditions, occurs under both cell proliferation and differentiation conditions and in an RNA- and phosphorylation-independent manner. Interacts with LIMD1, WTIP and AJUBA. Interacts with TRIM71. Interacts with APOBEC3G in an RNA-dependent manner. Interacts with APOBEC3A, APOBEC3C, APOBEC3F and APOBEC3H. Interacts with DICER1, TARBP2, EIF6, MOV10 and RPL7A (60S ribosome subunit); they form a large RNA-induced silencing complex (RISC). Interacts with FMR1. Interacts with ZFP36. Interacts with RC3H1; the interaction is RNA independent. Interacts with ARB2A. Found in a complex composed of AGO2, CHD7 and ARB2A. Interacts with SND1 and SYT11. Interacts with CLNK. Interacts with GARRE1. Interacts with GRB2; this interaction is important for the formation of a ternary complex containing GRB2, AGO2 and DICER1. The cofactor is Mg(2+). Mn(2+) is required as a cofactor. Hydroxylated. 4-hydroxylation appears to enhance protein stability but is not required for miRNA-binding or endonuclease activity. In terms of processing, ubiquitinated on surface-exposed lysines by a SCF-like E3 ubiquitin-protein ligase complex containing ZSWIM8 during target-directed microRNA degradation (TDMD), a process that mediates degradation of microRNAs (miRNAs). Ubiquitination by the SCF-like E3 ubiquitin-protein ligase complex containing ZSWIM8 leads to its subsequent degradation, thereby exposing miRNAs for degradation. ZSWIM8 recognizes and binds AGO2 when it is engaged with a TDMD target. Post-translationally, phosphorylation at Ser-388 by AKT3; leads to up-regulate translational repression of microRNA target and down-regulate endonucleolytic cleavage. A phosphorylation cycle of C-terminal serine cluster (Ser-825-Ser-835) regulates the release of target mRNAs. Target-binding leads to phosphorylation of these residues by CSNK1A1, which reduces the affinity of AGO2 for mRNA and enables target release. The ANKRD52-PPP6C phosphatase complex dephosphorylates the residues, which primes AGO2 for binding a new target. In terms of tissue distribution, ubiquitous expression in 9.5 day embryos with highest levels in forebrain, heart, limb buds, and branchial arches.

It is found in the cytoplasm. The protein localises to the P-body. The protein resides in the nucleus. The enzyme catalyses Endonucleolytic cleavage to 5'-phosphomonoester.. Required for RNA-mediated gene silencing (RNAi) by the RNA-induced silencing complex (RISC). The 'minimal RISC' appears to include AGO2 bound to a short guide RNA such as a microRNA (miRNA) or short interfering RNA (siRNA). These guide RNAs direct RISC to complementary mRNAs that are targets for RISC-mediated gene silencing. The precise mechanism of gene silencing depends on the degree of complementarity between the miRNA or siRNA and its target. Binding of RISC to a perfectly complementary mRNA generally results in silencing due to endonucleolytic cleavage of the mRNA specifically by AGO2. Binding of RISC to a partially complementary mRNA results in silencing through inhibition of translation, and this is independent of endonuclease activity. May inhibit translation initiation by binding to the 7-methylguanosine cap, thereby preventing the recruitment of the translation initiation factor eIF4-E. May also inhibit translation initiation via interaction with EIF6, which itself binds to the 60S ribosomal subunit and prevents its association with the 40S ribosomal subunit. The inhibition of translational initiation leads to the accumulation of the affected mRNA in cytoplasmic processing bodies (P-bodies), where mRNA degradation may subsequently occur. In some cases RISC-mediated translational repression is also observed for miRNAs that perfectly match the 3' untranslated region (3'-UTR). Can also up-regulate the translation of specific mRNAs under certain growth conditions. Binds to the AU element of the 3'-UTR of the TNF (TNF-alpha) mRNA and up-regulates translation under conditions of serum starvation. Also required for transcriptional gene silencing (TGS), in which short RNAs known as antigene RNAs or agRNAs direct the transcriptional repression of complementary promoter regions. Regulates lymphoid and erythroid development and function, and this is independent of endonuclease activity. The sequence is that of Protein argonaute-2 (Ago2) from Mus musculus (Mouse).